The chain runs to 113 residues: Molt-inhibiting hormone (113 aa).

A signal peptide spans M1–A35. Disulfide bonds link C42/C79, C59/C75, and C62/C88.

This sequence belongs to the arthropod CHH/MIH/GIH/VIH hormone family.

It localises to the secreted. Inhibits Y-organs where molting hormone (ecdysteroid) is secreted. A molting cycle is initiated when MIH secretion diminishes or stops. This Metacarcinus magister (Dungeness crab) protein is Molt-inhibiting hormone.